A 328-amino-acid polypeptide reads, in one-letter code: MPNYINYPSWLHPEVIQGIPITWYSLSYIFIILISYKFIWYQIQSDRIDIKKEDYETFMFSLVLGAILGGRLASTLVYDKSGIYYSHPWLIFLPFDQNWNFTGFRGMAIHGGFLGAIIAPLIIINTKLKNTNVKKYFLKLTDYGSIAFSSGYILGRLANFANAELYGRVMKGGIIFPNAEPFDTNTPGVKEFASSIGLEILPHDLLINLPRIPSQLIEGFFEGPVTCMLLWFLFRKIKKYDGFIFGIYVMLYAFFRFFIEYLREPDKDLGFIINYKPIKSLSEFSFLNISMGQILSLVLMFSGLIWVVVTKKIADKKIKNNTNLAYKN.

3 consecutive transmembrane segments (helical) span residues Val-15–Ser-35, Phe-58–Tyr-78, and Gly-106–Thr-126. Arg-156 contributes to the a 1,2-diacyl-sn-glycero-3-phospho-(1'-sn-glycerol) binding site. A run of 2 helical transmembrane segments spans residues Gly-242 to Leu-262 and Ile-289 to Val-309.

It belongs to the Lgt family.

Its subcellular location is the cell inner membrane. The enzyme catalyses L-cysteinyl-[prolipoprotein] + a 1,2-diacyl-sn-glycero-3-phospho-(1'-sn-glycerol) = an S-1,2-diacyl-sn-glyceryl-L-cysteinyl-[prolipoprotein] + sn-glycerol 1-phosphate + H(+). It functions in the pathway protein modification; lipoprotein biosynthesis (diacylglyceryl transfer). In terms of biological role, catalyzes the transfer of the diacylglyceryl group from phosphatidylglycerol to the sulfhydryl group of the N-terminal cysteine of a prolipoprotein, the first step in the formation of mature lipoproteins. The polypeptide is Phosphatidylglycerol--prolipoprotein diacylglyceryl transferase (Borrelia garinii subsp. bavariensis (strain ATCC BAA-2496 / DSM 23469 / PBi) (Borreliella bavariensis)).